Reading from the N-terminus, the 444-residue chain is Alpha-1,3-mannosyl-glycoprotein 2-beta-N-acetylglucosaminyltransferase (444 aa).

At 1–6 the chain is on the cytoplasmic side; the sequence is MARISC. A helical; Signal-anchor for type II membrane protein membrane pass occupies residues 7–24; the sequence is DLRFLLIPAAFMFIYIQM. The Lumenal portion of the chain corresponds to 25-444; the sequence is RLFQTQSQYA…SVMQLGIRNS (420 aa). Residues 61 to 92 adopt a coiled-coil conformation; the sequence is KQSRIVALEDMKNRQDEELVQLKDLIQTFEKK. Substrate contacts are provided by arginine 115, aspartate 144, histidine 188, and aspartate 210. Residue aspartate 211 participates in Mn(2+) binding. Residue aspartate 287 is the Proton acceptor of the active site. Substrate is bound at residue serine 318. A glycan (N-linked (GlcNAc...) asparagine) is linked at asparagine 351.

Belongs to the glycosyltransferase 13 family. Requires Mn(2+) as cofactor. In terms of processing, glycosylated. In terms of tissue distribution, expressed in roots, stems, leaves and flowers.

Its subcellular location is the golgi apparatus membrane. It carries out the reaction N(4)-(alpha-D-Man-(1-&gt;3)-[alpha-D-Man-(1-&gt;3)-[alpha-D-Man-(1-&gt;6)]-alpha-D-Man-(1-&gt;6)]-beta-D-Man-(1-&gt;4)-beta-D-GlcNAc-(1-&gt;4)-beta-D-GlcNAc)-L-asparaginyl-[protein] (N-glucan mannose isomer 5A1,2) + UDP-N-acetyl-alpha-D-glucosamine = N(4)-{beta-D-GlcNAc-(1-&gt;2)-alpha-D-Man-(1-&gt;3)-[alpha-D-Man-(1-&gt;3)-[alpha-D-Man-(1-&gt;6)]-alpha-D-Man-(1-&gt;6)]-beta-D-Man-(1-&gt;4)-beta-D-GlcNAc-(1-&gt;4)-beta-D-GlcNAc}-L-asparaginyl-[protein] + UDP + H(+). Its pathway is protein modification; protein glycosylation. Initiates complex N-linked carbohydrate formation. Essential for the conversion of high-mannose to hybrid and complex N-glycans. Required for normal root growth and morphology. The chain is Alpha-1,3-mannosyl-glycoprotein 2-beta-N-acetylglucosaminyltransferase from Arabidopsis thaliana (Mouse-ear cress).